Here is a 349-residue protein sequence, read N- to C-terminus: Sphingolipid C4-hydroxylase SUR2 (349 aa).

Helical transmembrane passes span 9–29 (AAGSFPLAFGLKTSFGFMHYA), 50–70 (VLALVAPVVAYWALSGIFHVI), 99–119 (FLEVILQHIIQTIVGLIFMHF), 148–168 (IYYGYMYGMSALKIFAGFLFV), and 209–229 (PVEGFLLDTLGTGIAMTLTHL). The Fatty acid hydroxylase domain maps to 162 to 297 (FAGFLFVDTW…FTFWDNLFQT (136 aa)).

Belongs to the sterol desaturase family.

Its subcellular location is the endoplasmic reticulum membrane. It carries out the reaction sphinganine + 2 Fe(II)-[cytochrome b5] + O2 + 2 H(+) = (4R)-hydroxysphinganine + 2 Fe(III)-[cytochrome b5] + H2O. The enzyme catalyses an N-acylsphinganine + 2 Fe(II)-[cytochrome b5] + O2 + 2 H(+) = an N-acyl-(4R)-4-hydroxysphinganine + 2 Fe(III)-[cytochrome b5] + H2O. It catalyses the reaction an N-acyleicosasphinganine + 2 Fe(II)-[cytochrome b5] + O2 + 2 H(+) = N-acyl-4-hydroxyeicosasphinganine + 2 Fe(III)-[cytochrome b5] + H2O. Its pathway is membrane lipid metabolism; sphingolipid biosynthesis. Required for hydroxylation of C-4 in the sphingoid moiety of ceramide. Catalyzes the conversion of sphinganine to phytosphingosine in sphingolipid biosynthesis. Involved in the response to syringomycin. This chain is Sphingolipid C4-hydroxylase SUR2 (SUR2), found in Saccharomyces cerevisiae (strain ATCC 204508 / S288c) (Baker's yeast).